The following is a 415-amino-acid chain: Gamma-glutamyl phosphate reductase (415 aa).

This sequence belongs to the gamma-glutamyl phosphate reductase family.

The protein localises to the cytoplasm. It carries out the reaction L-glutamate 5-semialdehyde + phosphate + NADP(+) = L-glutamyl 5-phosphate + NADPH + H(+). Its pathway is amino-acid biosynthesis; L-proline biosynthesis; L-glutamate 5-semialdehyde from L-glutamate: step 2/2. In terms of biological role, catalyzes the NADPH-dependent reduction of L-glutamate 5-phosphate into L-glutamate 5-semialdehyde and phosphate. The product spontaneously undergoes cyclization to form 1-pyrroline-5-carboxylate. The sequence is that of Gamma-glutamyl phosphate reductase from Shouchella clausii (strain KSM-K16) (Alkalihalobacillus clausii).